The following is a 246-amino-acid chain: Predicted GPI-anchored protein 33 (246 aa).

The signal sequence occupies residues 1 to 16; that stretch reads MRGIILLSFVLTSCLA. A glycan (N-linked (GlcNAc...) asparagine) is linked at asparagine 214. The GPI-anchor amidated asparagine moiety is linked to residue asparagine 219. The propeptide at 220–246 is removed in mature form; it reads AAGVYSTNSVLVFVSICIGFIGGSLGI.

The protein localises to the cell membrane. The chain is Predicted GPI-anchored protein 33 (PGA33) from Candida albicans (strain SC5314 / ATCC MYA-2876) (Yeast).